The sequence spans 340 residues: Methionine import ATP-binding protein MetN (340 aa).

The region spanning 5-243 (IEFRGVTKSF…PQTTTARRFV (239 aa)) is the ABC transporter domain. 40 to 47 (GYSGAGKS) lines the ATP pocket.

Belongs to the ABC transporter superfamily. Methionine importer (TC 3.A.1.24) family. In terms of assembly, the complex is composed of two ATP-binding proteins (MetN), two transmembrane proteins (MetI) and a solute-binding protein (MetQ).

The protein localises to the cell membrane. It carries out the reaction L-methionine(out) + ATP + H2O = L-methionine(in) + ADP + phosphate + H(+). The catalysed reaction is D-methionine(out) + ATP + H2O = D-methionine(in) + ADP + phosphate + H(+). Part of the ABC transporter complex MetNIQ involved in methionine import. Responsible for energy coupling to the transport system. This Leifsonia xyli subsp. xyli (strain CTCB07) protein is Methionine import ATP-binding protein MetN.